The following is a 470-amino-acid chain: ATP synthase subunit beta (470 aa).

Residue 157-164 (GGAGVGKT) participates in ATP binding.

It belongs to the ATPase alpha/beta chains family. F-type ATPases have 2 components, CF(1) - the catalytic core - and CF(0) - the membrane proton channel. CF(1) has five subunits: alpha(3), beta(3), gamma(1), delta(1), epsilon(1). CF(0) has three main subunits: a(1), b(2) and c(9-12). The alpha and beta chains form an alternating ring which encloses part of the gamma chain. CF(1) is attached to CF(0) by a central stalk formed by the gamma and epsilon chains, while a peripheral stalk is formed by the delta and b chains.

Its subcellular location is the cell inner membrane. It carries out the reaction ATP + H2O + 4 H(+)(in) = ADP + phosphate + 5 H(+)(out). Functionally, produces ATP from ADP in the presence of a proton gradient across the membrane. The catalytic sites are hosted primarily by the beta subunits. The protein is ATP synthase subunit beta of Citrifermentans bemidjiense (strain ATCC BAA-1014 / DSM 16622 / JCM 12645 / Bem) (Geobacter bemidjiensis).